A 1332-amino-acid chain; its full sequence is Elongator complex protein 1 (1332 aa).

Phosphoserine is present on residues S471, S804, S867, S1171, and S1174. Residues 885–1332 form a mediates dimerization region; it reads VDVNELYDHS…RTQWKLSLLD (448 aa). Positions 1150–1208 are disordered; that stretch reads QAGLDDEVPHGQESDLFSETSSVVSGSEMSGKYSHSNSRISARSSKNRRKAERKKHSLK. The span at 1164–1177 shows a compositional bias: polar residues; sequence DLFSETSSVVSGSE. The tract at residues 1191 to 1209 is required for binding to tRNA; that stretch reads ARSSKNRRKAERKKHSLKE. Over residues 1194 to 1206 the composition is skewed to basic residues; sequence SKNRRKAERKKHS.

This sequence belongs to the ELP1/IKA1 family. As to quaternary structure, homodimer; dimerization promotes ELP1 stability and elongator complex formation. Component of the elongator complex which consists of ELP1, ELP2, ELP3, ELP4, ELP5 and ELP6. Interacts preferentially with MAP3K14/NIK followed by IKK-alpha and IKK-beta.

Its subcellular location is the cytoplasm. It localises to the nucleus. It participates in tRNA modification; 5-methoxycarbonylmethyl-2-thiouridine-tRNA biosynthesis. Its function is as follows. Component of the elongator complex which is required for multiple tRNA modifications, including mcm5U (5-methoxycarbonylmethyl uridine), mcm5s2U (5-methoxycarbonylmethyl-2-thiouridine), and ncm5U (5-carbamoylmethyl uridine). The elongator complex catalyzes the formation of carboxymethyluridine in the wobble base at position 34 in tRNAs. Regulates the migration and branching of projection neurons in the developing cerebral cortex, through a process depending on alpha-tubulin acetylation. ELP1 binds to tRNA, mediating interaction of the elongator complex with tRNA. May act as a scaffold protein that assembles active IKK-MAP3K14 complexes (IKKA, IKKB and MAP3K14/NIK). The protein is Elongator complex protein 1 of Homo sapiens (Human).